Consider the following 62-residue polypeptide: Metallothionein-like protein 3A (62 aa).

This sequence belongs to the metallothionein superfamily. Type 15 family.

In terms of biological role, metallothioneins have a high content of cysteine residues that bind various heavy metals. The polypeptide is Metallothionein-like protein 3A (MT3A) (Oryza sativa subsp. indica (Rice)).